The primary structure comprises 491 residues: Iota-carrageenase (491 aa).

An N-terminal signal peptide occupies residues 1 to 23 (MRLYFRKLWLTNLFLGGALASSA). Intrachain disulfides connect Cys-269–Cys-298, Cys-336–Cys-360, Cys-408–Cys-476, and Cys-412–Cys-484.

Belongs to the glycosyl hydrolase 82 family.

It localises to the secreted. The catalysed reaction is Endohydrolysis of 1,4-beta-D-linkages between D-galactose 4-sulfate and 3,6-anhydro-D-galactose-2-sulfate in iota-carrageenans.. Functionally, hydrolyzes iota-carrageenans, sulfated 1,3-alpha-1,4-beta galactans from red algal cell walls, with an inversion of anomeric configuration. Also active against hybrid iota-/nu-carrageenan, not active against kappa- or lambda-carrageenans. In Alteromonas macleodii (Pseudoalteromonas macleodii), this protein is Iota-carrageenase.